We begin with the raw amino-acid sequence, 547 residues long: CTP synthase (547 aa).

Positions 1 to 265 are amidoligase domain; the sequence is MTKFVFVTGG…DRIVCEKLAL (265 aa). Ser13 is a binding site for CTP. Ser13 is a UTP binding site. ATP is bound by residues 14 to 19 and Asp71; that span reads SLGKGI. Asp71 and Glu139 together coordinate Mg(2+). Residues 146 to 148, 186 to 191, and Lys222 each bind CTP; these read DIE and KTKPTQ. UTP is bound by residues 186 to 191 and Lys222; that span reads KTKPTQ. The Glutamine amidotransferase type-1 domain occupies 290-542; the sequence is TIGMVGKYVD…IKAALAHKHA (253 aa). Gly351 contacts L-glutamine. Cys378 acts as the Nucleophile; for glutamine hydrolysis in catalysis. Residues 379-382, Glu402, and Arg468 each bind L-glutamine; that span reads LGMQ. Active-site residues include His515 and Glu517.

The protein belongs to the CTP synthase family. Homotetramer.

The catalysed reaction is UTP + L-glutamine + ATP + H2O = CTP + L-glutamate + ADP + phosphate + 2 H(+). The enzyme catalyses L-glutamine + H2O = L-glutamate + NH4(+). It carries out the reaction UTP + NH4(+) + ATP = CTP + ADP + phosphate + 2 H(+). Its pathway is pyrimidine metabolism; CTP biosynthesis via de novo pathway; CTP from UDP: step 2/2. Its activity is regulated as follows. Allosterically activated by GTP, when glutamine is the substrate; GTP has no effect on the reaction when ammonia is the substrate. The allosteric effector GTP functions by stabilizing the protein conformation that binds the tetrahedral intermediate(s) formed during glutamine hydrolysis. Inhibited by the product CTP, via allosteric rather than competitive inhibition. Catalyzes the ATP-dependent amination of UTP to CTP with either L-glutamine or ammonia as the source of nitrogen. Regulates intracellular CTP levels through interactions with the four ribonucleotide triphosphates. In Janthinobacterium sp. (strain Marseille) (Minibacterium massiliensis), this protein is CTP synthase.